Reading from the N-terminus, the 462-residue chain is Argininosuccinate lyase (462 aa).

It belongs to the lyase 1 family. Argininosuccinate lyase subfamily.

The protein resides in the cytoplasm. The enzyme catalyses 2-(N(omega)-L-arginino)succinate = fumarate + L-arginine. Its pathway is amino-acid biosynthesis; L-arginine biosynthesis; L-arginine from L-ornithine and carbamoyl phosphate: step 3/3. The chain is Argininosuccinate lyase from Exiguobacterium sp. (strain ATCC BAA-1283 / AT1b).